A 1464-amino-acid chain; its full sequence is Gag-Pol polyprotein (1464 aa).

The N-myristoyl glycine; by host moiety is linked to residue G2. Residues 7 to 31 (VLRGKKADELERIRLRPGGKKKYRL) are interaction with Gp41. Positions 16–22 (LERIRLR) match the Nuclear export signal motif. Positions 26-32 (KKKYRLK) match the Nuclear localization signal motif. Residues 111–136 (ETGTAEKMPSTSRPTAPSSEKGGNYP) form a disordered region. The segment covering 119 to 128 (PSTSRPTAPS) has biased composition (polar residues). Y135 is modified (phosphotyrosine; by host). Residues 191–228 (NCVGDHQAAMQIIREIINEEAAEWDVQHPIPGPLPAGQ) form an interaction with human PPIA/CYPA and NUP153 region. The tract at residues 279–365 (YNPTNILDIK…GGPGQKARLM (87 aa)) is dimerization/Multimerization of capsid protein p24. 2 CCHC-type zinc fingers span residues 389-406 (FKCW…QCRA) and 410-427 (QGCW…NCPD). A disordered region spans residues 432-500 (FLRTGPLGKE…RGLTAPRAGG (69 aa)). The span at 456 to 469 (TNSTPSGSSSGSTG) shows a compositional bias: low complexity. Positions 473–485 (AAREKTERAERET) are enriched in basic and acidic residues. The tract at residues 514–518 (PQFSL) is dimerization of protease. Residues 533-602 (VEVLLDTGAD…TPINIFGRNI (70 aa)) form the Peptidase A2 domain. D538 functions as the For protease activity; shared with dimeric partner in the catalytic mechanism. Dimerization of protease stretches follow at residues 562–568 (GIGGFIN) and 601–613 (NILT…LNLP). One can recognise a Reverse transcriptase domain in the interval 656-846 (EGQLEEAPPT…PPYHWMGYEL (191 aa)). Residues D722, D797, and D798 each contribute to the Mg(2+) site. An RT 'primer grip' region spans residues 839-847 (YHWMGYELW). Residues 1009–1025 (WEQWWDNYWQVTWIPDW) carry the Tryptophan repeat motif motif. The RNase H type-1 domain occupies 1045–1168 (IPGAETFYTD…VDHLVSQGIR (124 aa)). The Mg(2+) site is built by D1054, E1089, D1109, and D1160. The Integrase-type zinc finger occupies 1174–1215 (EKIEPAQEEHEKYHSNVKELSHKFGIPNLVARQIVNSCAQCQ). Positions 1183, 1187, 1211, and 1214 each coordinate Zn(2+). The 152-residue stretch at 1224–1375 (QVNAELGTWQ…TPSERLINMI (152 aa)) folds into the Integrase catalytic domain. 3 residues coordinate Mg(2+): D1235, D1287, and E1323. The segment at residues 1394–1441 (FRVYFREGRDQLWKGPGELLWKGEGAVLVKVGTDIKIIPRRKAKIIRD) is a DNA-binding region (integrase-type).

As to quaternary structure, homotrimer; further assembles as hexamers of trimers. Interacts with gp41 (via C-terminus). Interacts with host CALM1; this interaction induces a conformational change in the Matrix protein, triggering exposure of the myristate group. Interacts with host AP3D1; this interaction allows the polyprotein trafficking to multivesicular bodies during virus assembly. Part of the pre-integration complex (PIC) which is composed of viral genome, matrix protein, Vpr and integrase. In terms of assembly, homodimer; the homodimer further multimerizes as homohexamers or homopentamers. Interacts with human PPIA/CYPA. Interacts with human NUP153. Interacts with host PDZD8; this interaction stabilizes the capsid. Interacts with monkey TRIM5; this interaction destabilizes the capsid. Homodimer, whose active site consists of two apposed aspartic acid residues. As to quaternary structure, heterodimer of p66 RT and p51 RT (RT p66/p51). Heterodimerization of RT is essential for DNA polymerase activity. The overall folding of the subdomains is similar in p66 RT and p51 RT but the spatial arrangements of the subdomains are dramatically different. In terms of assembly, homotetramer; may further associate as a homohexadecamer. Part of the pre-integration complex (PIC) which is composed of viral genome, matrix protein, Vpr and integrase. Interacts with human SMARCB1/INI1 and human PSIP1/LEDGF isoform 1. Interacts with human KPNA3; this interaction might play a role in nuclear import of the pre-integration complex. Interacts with human NUP153; this interaction might play a role in nuclear import of the pre-integration complex. Mg(2+) serves as cofactor. In terms of processing, specific enzymatic cleavages by the viral protease yield mature proteins. The protease is released by autocatalytic cleavage. The polyprotein is cleaved during and after budding, this process is termed maturation. Proteolytic cleavage of p66 RT removes the RNase H domain to yield the p51 RT subunit. Nucleocapsid protein p7 might be further cleaved after virus entry.

The protein localises to the host cell membrane. It localises to the host endosome. The protein resides in the host multivesicular body. Its subcellular location is the virion membrane. It is found in the host nucleus. The protein localises to the host cytoplasm. It localises to the virion. The enzyme catalyses Endopeptidase for which the P1 residue is preferably hydrophobic.. The catalysed reaction is Endohydrolysis of RNA in RNA/DNA hybrids. Three different cleavage modes: 1. sequence-specific internal cleavage of RNA. Human immunodeficiency virus type 1 and Moloney murine leukemia virus enzymes prefer to cleave the RNA strand one nucleotide away from the RNA-DNA junction. 2. RNA 5'-end directed cleavage 13-19 nucleotides from the RNA end. 3. DNA 3'-end directed cleavage 15-20 nucleotides away from the primer terminus.. It catalyses the reaction 3'-end directed exonucleolytic cleavage of viral RNA-DNA hybrid.. It carries out the reaction DNA(n) + a 2'-deoxyribonucleoside 5'-triphosphate = DNA(n+1) + diphosphate. Protease: The viral protease is inhibited by many synthetic protease inhibitors (PIs), such as amprenavir, atazanavir, indinavir, loprinavir, nelfinavir, ritonavir and saquinavir. Use of protease inhibitors in tritherapy regimens permit more ambitious therapeutic strategies. Reverse transcriptase/ribonuclease H: RT can be inhibited either by nucleoside RT inhibitors (NRTIs) or by non nucleoside RT inhibitors (NNRTIs). NRTIs act as chain terminators, whereas NNRTIs inhibit DNA polymerization by binding a small hydrophobic pocket near the RT active site and inducing an allosteric change in this region. Classical NRTIs are abacavir, adefovir (PMEA), didanosine (ddI), lamivudine (3TC), stavudine (d4T), tenofovir (PMPA), zalcitabine (ddC), and zidovudine (AZT). Classical NNRTIs are atevirdine (BHAP U-87201E), delavirdine, efavirenz (DMP-266), emivirine (I-EBU), and nevirapine (BI-RG-587). The tritherapies used as a basic effective treatment of AIDS associate two NRTIs and one NNRTI. Mediates, with Gag polyprotein, the essential events in virion assembly, including binding the plasma membrane, making the protein-protein interactions necessary to create spherical particles, recruiting the viral Env proteins, and packaging the genomic RNA via direct interactions with the RNA packaging sequence (Psi). Gag-Pol polyprotein may regulate its own translation, by the binding genomic RNA in the 5'-UTR. At low concentration, the polyprotein would promote translation, whereas at high concentration, the polyprotein would encapsidate genomic RNA and then shut off translation. Its function is as follows. Targets the polyprotein to the plasma membrane via a multipartite membrane-binding signal, that includes its myristoylated N-terminus. Matrix protein is part of the pre-integration complex. Implicated in the release from host cell mediated by Vpu. Binds to RNA. In terms of biological role, forms the conical core that encapsulates the genomic RNA-nucleocapsid complex in the virion. Most core are conical, with only 7% tubular. The core is constituted by capsid protein hexamer subunits. The core is disassembled soon after virion entry. Host restriction factors such as TRIM5-alpha or TRIMCyp bind retroviral capsids and cause premature capsid disassembly, leading to blocks in reverse transcription. Capsid restriction by TRIM5 is one of the factors which restricts HIV-1 to the human species. Host PIN1 apparently facilitates the virion uncoating. On the other hand, interactions with PDZD8 or CYPA stabilize the capsid. Functionally, encapsulates and protects viral dimeric unspliced genomic RNA (gRNA). Binds these RNAs through its zinc fingers. Acts as a nucleic acid chaperone which is involved in rearangement of nucleic acid secondary structure during gRNA retrotranscription. Also facilitates template switch leading to recombination. As part of the polyprotein, participates in gRNA dimerization, packaging, tRNA incorporation and virion assembly. Aspartyl protease that mediates proteolytic cleavages of Gag and Gag-Pol polyproteins during or shortly after the release of the virion from the plasma membrane. Cleavages take place as an ordered, step-wise cascade to yield mature proteins. This process is called maturation. Displays maximal activity during the budding process just prior to particle release from the cell. Also cleaves Nef and Vif, probably concomitantly with viral structural proteins on maturation of virus particles. Hydrolyzes host EIF4GI and PABP1 in order to shut off the capped cellular mRNA translation. The resulting inhibition of cellular protein synthesis serves to ensure maximal viral gene expression and to evade host immune response. Its function is as follows. Multifunctional enzyme that converts the viral RNA genome into dsDNA in the cytoplasm, shortly after virus entry into the cell. This enzyme displays a DNA polymerase activity that can copy either DNA or RNA templates, and a ribonuclease H (RNase H) activity that cleaves the RNA strand of RNA-DNA heteroduplexes in a partially processive 3' to 5' endonucleasic mode. Conversion of viral genomic RNA into dsDNA requires many steps. A tRNA(3)-Lys binds to the primer-binding site (PBS) situated at the 5'-end of the viral RNA. RT uses the 3' end of the tRNA primer to perform a short round of RNA-dependent minus-strand DNA synthesis. The reading proceeds through the U5 region and ends after the repeated (R) region which is present at both ends of viral RNA. The portion of the RNA-DNA heteroduplex is digested by the RNase H, resulting in a ssDNA product attached to the tRNA primer. This ssDNA/tRNA hybridizes with the identical R region situated at the 3' end of viral RNA. This template exchange, known as minus-strand DNA strong stop transfer, can be either intra- or intermolecular. RT uses the 3' end of this newly synthesized short ssDNA to perform the RNA-dependent minus-strand DNA synthesis of the whole template. RNase H digests the RNA template except for two polypurine tracts (PPTs) situated at the 5'-end and near the center of the genome. It is not clear if both polymerase and RNase H activities are simultaneous. RNase H probably can proceed both in a polymerase-dependent (RNA cut into small fragments by the same RT performing DNA synthesis) and a polymerase-independent mode (cleavage of remaining RNA fragments by free RTs). Secondly, RT performs DNA-directed plus-strand DNA synthesis using the PPTs that have not been removed by RNase H as primers. PPTs and tRNA primers are then removed by RNase H. The 3' and 5' ssDNA PBS regions hybridize to form a circular dsDNA intermediate. Strand displacement synthesis by RT to the PBS and PPT ends produces a blunt ended, linear dsDNA copy of the viral genome that includes long terminal repeats (LTRs) at both ends. In terms of biological role, catalyzes viral DNA integration into the host chromosome, by performing a series of DNA cutting and joining reactions. This enzyme activity takes place after virion entry into a cell and reverse transcription of the RNA genome in dsDNA. The first step in the integration process is 3' processing. This step requires a complex comprising the viral genome, matrix protein, Vpr and integrase. This complex is called the pre-integration complex (PIC). The integrase protein removes 2 nucleotides from each 3' end of the viral DNA, leaving recessed CA OH's at the 3' ends. In the second step, the PIC enters cell nucleus. This process is mediated through integrase and Vpr proteins, and allows the virus to infect a non dividing cell. This ability to enter the nucleus is specific of lentiviruses, other retroviruses cannot and rely on cell division to access cell chromosomes. In the third step, termed strand transfer, the integrase protein joins the previously processed 3' ends to the 5' ends of strands of target cellular DNA at the site of integration. The 5'-ends are produced by integrase-catalyzed staggered cuts, 5 bp apart. A Y-shaped, gapped, recombination intermediate results, with the 5'-ends of the viral DNA strands and the 3' ends of target DNA strands remaining unjoined, flanking a gap of 5 bp. The last step is viral DNA integration into host chromosome. This involves host DNA repair synthesis in which the 5 bp gaps between the unjoined strands are filled in and then ligated. Since this process occurs at both cuts flanking the HIV genome, a 5 bp duplication of host DNA is produced at the ends of HIV-1 integration. Alternatively, Integrase may catalyze the excision of viral DNA just after strand transfer, this is termed disintegration. This chain is Gag-Pol polyprotein (gag-pol), found in Homo sapiens (Human).